A 364-amino-acid polypeptide reads, in one-letter code: 4-hydroxy-3-methylbut-2-en-1-yl diphosphate synthase (flavodoxin) (364 aa).

Cys268, Cys271, Cys303, and Glu310 together coordinate [4Fe-4S] cluster.

It belongs to the IspG family. It depends on [4Fe-4S] cluster as a cofactor.

The catalysed reaction is (2E)-4-hydroxy-3-methylbut-2-enyl diphosphate + oxidized [flavodoxin] + H2O + 2 H(+) = 2-C-methyl-D-erythritol 2,4-cyclic diphosphate + reduced [flavodoxin]. It functions in the pathway isoprenoid biosynthesis; isopentenyl diphosphate biosynthesis via DXP pathway; isopentenyl diphosphate from 1-deoxy-D-xylulose 5-phosphate: step 5/6. In terms of biological role, converts 2C-methyl-D-erythritol 2,4-cyclodiphosphate (ME-2,4cPP) into 1-hydroxy-2-methyl-2-(E)-butenyl 4-diphosphate. The polypeptide is 4-hydroxy-3-methylbut-2-en-1-yl diphosphate synthase (flavodoxin) (Anoxybacillus flavithermus (strain DSM 21510 / WK1)).